Consider the following 443-residue polypeptide: Intermediate filament protein ifd-2 (443 aa).

Positions 1–58 (MTDPLNPTRLQNHPALARIIESGRTNLPTGITTSGALSAYAQNAAAIIRDNREREKVE) are head. Positions 55–405 (EKVEIADLNN…KLMENAEHLR (351 aa)) constitute an IF rod domain. Residues 59–90 (IADLNNRLARYVEKVRFLEAQNRVLENDIGVF) are coil 1A. The tract at residues 91–104 (RNAAHTHSERIAVY) is linker 1. The tract at residues 105-239 (FESEKASLFT…SQHDIAIREE (135 aa)) is coil 1B. The tract at residues 240-257 (ISKARRDTTNKNRDYFHN) is linker 12. The tract at residues 258-403 (ELHAAMKEIR…YRKLMENAEH (146 aa)) is coil 2. Residues 404–443 (LRTTVQTHVTYNAPPPPLPQSGPRTTSYHAYGSAYNDSLL) are tail.

This sequence belongs to the intermediate filament family.

It is found in the cytoplasm. In terms of biological role, cytoplasmic intermediate filaments provide mechanical strength to cells. Not essential protein. The protein is Intermediate filament protein ifd-2 (ifd-2) of Caenorhabditis elegans.